The primary structure comprises 831 residues: von Willebrand factor A domain-containing protein DDB_G0285981 (831 aa).

The VIT domain maps to 60–188 (RDTFGLKTFS…NVTIHLTIIS (129 aa)). One can recognise a VWFA domain in the interval 312-480 (EFIFLIDCSG…NFEEQVMKLV (169 aa)).

The chain is von Willebrand factor A domain-containing protein DDB_G0285981 from Dictyostelium discoideum (Social amoeba).